Reading from the N-terminus, the 940-residue chain is Isoleucine--tRNA ligase (940 aa).

The 'HIGH' region signature appears at 58–68 (PYANGSIHIGH). An L-isoleucyl-5'-AMP-binding site is contributed by Glu564. Positions 605–609 (KMSKS) match the 'KMSKS' region motif. Lys608 lines the ATP pocket. Zn(2+) contacts are provided by Cys903, Cys906, Cys923, and Cys926.

The protein belongs to the class-I aminoacyl-tRNA synthetase family. IleS type 1 subfamily. In terms of assembly, monomer. The cofactor is Zn(2+).

The protein resides in the cytoplasm. The enzyme catalyses tRNA(Ile) + L-isoleucine + ATP = L-isoleucyl-tRNA(Ile) + AMP + diphosphate. Functionally, catalyzes the attachment of isoleucine to tRNA(Ile). As IleRS can inadvertently accommodate and process structurally similar amino acids such as valine, to avoid such errors it has two additional distinct tRNA(Ile)-dependent editing activities. One activity is designated as 'pretransfer' editing and involves the hydrolysis of activated Val-AMP. The other activity is designated 'posttransfer' editing and involves deacylation of mischarged Val-tRNA(Ile). The protein is Isoleucine--tRNA ligase of Shewanella baltica (strain OS195).